The sequence spans 344 residues: L-rhamnose-proton symporter (344 aa).

10 consecutive transmembrane segments (helical) span residues 4–24 (AITM…CFYA), 38–58 (WSVG…ALLL), 68–88 (FNLS…IGNI), 101–121 (MGIG…TPII), 137–157 (TLLG…AGQL), 175–195 (LLLA…MNAA), 214–234 (LPSY…FCFI), 259–279 (ILLS…YAWG), 290–310 (MSWM…GLVL), and 321–341 (VAVL…VGLG).

It belongs to the L-rhamnose transporter (TC 2.A.7.6) family.

It is found in the cell inner membrane. The enzyme catalyses L-rhamnopyranose(in) + H(+)(in) = L-rhamnopyranose(out) + H(+)(out). Its function is as follows. Uptake of L-rhamnose across the cytoplasmic membrane with the concomitant transport of protons into the cell (symport system). This chain is L-rhamnose-proton symporter, found in Salmonella paratyphi A (strain ATCC 9150 / SARB42).